The following is a 211-amino-acid chain: Cytochrome c biogenesis ATP-binding export protein CcmA (211 aa).

The region spanning 8–210 is the ABC transporter domain; it reads LEAKNLQCER…EVRRIQLGAV (203 aa). Residue 40 to 47 coordinates ATP; sequence GPNGAGKT.

The protein belongs to the ABC transporter superfamily. CcmA exporter (TC 3.A.1.107) family. As to quaternary structure, the complex is composed of two ATP-binding proteins (CcmA) and two transmembrane proteins (CcmB).

Its subcellular location is the cell inner membrane. The catalysed reaction is heme b(in) + ATP + H2O = heme b(out) + ADP + phosphate + H(+). Functionally, part of the ABC transporter complex CcmAB involved in the biogenesis of c-type cytochromes; once thought to export heme, this seems not to be the case, but its exact role is uncertain. Responsible for energy coupling to the transport system. This chain is Cytochrome c biogenesis ATP-binding export protein CcmA, found in Hahella chejuensis (strain KCTC 2396).